We begin with the raw amino-acid sequence, 530 residues long: Bifunctional purine biosynthesis protein PurH (530 aa).

Residues 1–147 (MPSIKRALIS…KNWKHVAIVT (147 aa)) enclose the MGS-like domain.

This sequence belongs to the PurH family.

The enzyme catalyses (6R)-10-formyltetrahydrofolate + 5-amino-1-(5-phospho-beta-D-ribosyl)imidazole-4-carboxamide = 5-formamido-1-(5-phospho-D-ribosyl)imidazole-4-carboxamide + (6S)-5,6,7,8-tetrahydrofolate. It catalyses the reaction IMP + H2O = 5-formamido-1-(5-phospho-D-ribosyl)imidazole-4-carboxamide. It functions in the pathway purine metabolism; IMP biosynthesis via de novo pathway; 5-formamido-1-(5-phospho-D-ribosyl)imidazole-4-carboxamide from 5-amino-1-(5-phospho-D-ribosyl)imidazole-4-carboxamide (10-formyl THF route): step 1/1. Its pathway is purine metabolism; IMP biosynthesis via de novo pathway; IMP from 5-formamido-1-(5-phospho-D-ribosyl)imidazole-4-carboxamide: step 1/1. The protein is Bifunctional purine biosynthesis protein PurH of Neisseria meningitidis serogroup A / serotype 4A (strain DSM 15465 / Z2491).